A 200-amino-acid chain; its full sequence is Ribosome maturation factor RimP (200 aa).

It belongs to the RimP family.

It localises to the cytoplasm. In terms of biological role, required for maturation of 30S ribosomal subunits. The protein is Ribosome maturation factor RimP of Polaromonas sp. (strain JS666 / ATCC BAA-500).